Reading from the N-terminus, the 438-residue chain is MENIALESSFLEYDINEPIKIYTGHFTIEVADDFFEILGEVKIAFLPKARLIFEGAISGNLSKLFEFEKAMKSNNMMINVPGFMKSEVLISGITDGSKGNKVSGILKRSILTSAETKVNRMEFTVVNFVNDLGRRIVHGRFKFSGRTKLKYKDWEIILDKRYDYSNKKIFDRLKNSGGYLITHVGYLKRVDDKLFDTKEVEPLISGLYWLLSFSAGRHVAIPTLEGYHNEEVIWSKYQVPLIDGWTNNITWFPKQKSPSLEHLFPKVIEKQEDPFWNKVLWEVLSWYSQAHSSSIVENKVVSVQVALETLAWVYLIVDRKSNISKSKYKYMNAAEKFREILSRFSIDLSIPKLFIDIKDNYDDGPHLFTVFRNKIVHPTRELDFDNPIDKLHVLYLGVWYLELLTLGILGYEGSYVNRLKVPIIEGVYEFVPWKTRDN.

Residues 391-411 traverse the membrane as a helical segment; sequence LHVLYLGVWYLELLTLGILGY.

The protein resides in the cell membrane. The protein is SPbeta prophage-derived uncharacterized protein YopA (yopA) of Bacillus subtilis (strain 168).